The primary structure comprises 132 residues: Peptide methionine sulfoxide reductase MsrB (132 aa).

The MsrB domain maps to 8 to 130 (LDSWREELTE…NSASLKLVPR (123 aa)). Cys47, Cys50, Cys96, and Cys99 together coordinate Zn(2+). Residue Cys119 is the Nucleophile of the active site.

The protein belongs to the MsrB Met sulfoxide reductase family. The cofactor is Zn(2+).

It catalyses the reaction L-methionyl-[protein] + [thioredoxin]-disulfide + H2O = L-methionyl-(R)-S-oxide-[protein] + [thioredoxin]-dithiol. In Pseudomonas paraeruginosa (strain DSM 24068 / PA7) (Pseudomonas aeruginosa (strain PA7)), this protein is Peptide methionine sulfoxide reductase MsrB.